Consider the following 804-residue polypeptide: Probable cadmium-transporting ATPase (804 aa).

HMA domains lie at 11–74 (DKQV…LKVA) and 89–152 (DKNV…LKVI). Cd(2+)-binding residues include cysteine 22, cysteine 25, cysteine 100, and cysteine 103. 5 helical membrane-spanning segments follow: residues 183–203 (STLLFATLLIAFGYLSHFVNG), 207–227 (LVTSMLFVSSIVIGGYSLFKV), 248–268 (IGAAIIGEWAEASIVVILFAI), 413–433 (IIMVIAALVAVVPPLFFGGSW), and 441–461 (LAVLVVGCPCALVITTPISIV). Catalysis depends on aspartate 492, which acts as the 4-aspartylphosphate intermediate. 2 helical membrane-spanning segments follow: residues 749-771 (LNIIKANITFAIGIKIIALLLVI) and 776-798 (TLWIAILSDMGATILVALNSLRL).

The protein belongs to the cation transport ATPase (P-type) (TC 3.A.3) family. Type IB subfamily.

It localises to the cell membrane. The catalysed reaction is Cd(2+)(in) + ATP + H2O = Cd(2+)(out) + ADP + phosphate + H(+). Functionally, couples the hydrolysis of ATP with the export of cadmium. Involved in cadmium resistance. The protein is Probable cadmium-transporting ATPase (cadA) of Staphylococcus aureus.